A 452-amino-acid polypeptide reads, in one-letter code: Tryptophan biosynthesis protein TrpCF (452 aa).

The segment at 1 to 253 (MPSVLENILK…KACIKLILGE (253 aa)) is indole-3-glycerol phosphate synthase. The interval 254 to 448 (NKVCGLTRIK…KDKIKQLARI (195 aa)) is N-(5'-phosphoribosyl)anthranilate isomerase.

This sequence in the N-terminal section; belongs to the TrpC family. In the C-terminal section; belongs to the TrpF family.

The enzyme catalyses N-(5-phospho-beta-D-ribosyl)anthranilate = 1-(2-carboxyphenylamino)-1-deoxy-D-ribulose 5-phosphate. The catalysed reaction is 1-(2-carboxyphenylamino)-1-deoxy-D-ribulose 5-phosphate + H(+) = (1S,2R)-1-C-(indol-3-yl)glycerol 3-phosphate + CO2 + H2O. The protein operates within amino-acid biosynthesis; L-tryptophan biosynthesis; L-tryptophan from chorismate: step 3/5. It participates in amino-acid biosynthesis; L-tryptophan biosynthesis; L-tryptophan from chorismate: step 4/5. In terms of biological role, bifunctional enzyme that catalyzes two sequential steps of tryptophan biosynthetic pathway. The first reaction is catalyzed by the isomerase, coded by the TrpF domain; the second reaction is catalyzed by the synthase, coded by the TrpC domain. The polypeptide is Tryptophan biosynthesis protein TrpCF (trpC) (Helicobacter pylori (strain J99 / ATCC 700824) (Campylobacter pylori J99)).